Here is a 342-residue protein sequence, read N- to C-terminus: Phosphate acyltransferase (342 aa).

It belongs to the PlsX family. Homodimer. Probably interacts with PlsY.

The protein localises to the cytoplasm. It carries out the reaction a fatty acyl-[ACP] + phosphate = an acyl phosphate + holo-[ACP]. It functions in the pathway lipid metabolism; phospholipid metabolism. In terms of biological role, catalyzes the reversible formation of acyl-phosphate (acyl-PO(4)) from acyl-[acyl-carrier-protein] (acyl-ACP). This enzyme utilizes acyl-ACP as fatty acyl donor, but not acyl-CoA. This Pelotomaculum thermopropionicum (strain DSM 13744 / JCM 10971 / SI) protein is Phosphate acyltransferase.